The chain runs to 143 residues: Histone H2B.2, sperm (143 aa).

The disordered stretch occupies residues 1–49; the sequence is MPKSPSKSSPRKGSPRKGSPRKGSPKRGGKGAKRAGKGGRRNVVKRRRR. 5 consecutive short sequence motifs (SPKK motif) follow at residues 4–7, 9–12, 14–17, 19–22, and 24–27; these read SPSK, SPRK, and SPKR. Over residues 9–49 the composition is skewed to basic residues; it reads SPRKGSPRKGSPRKGSPKRGGKGAKRAGKGGRRNVVKRRRR. Phosphoserine occurs at positions 14, 19, and 24. Ser129 carries an O-linked (GlcNAc) serine glycan. Lys137 participates in a covalent cross-link: Glycyl lysine isopeptide (Lys-Gly) (interchain with G-Cter in ubiquitin).

This sequence belongs to the histone H2B family. As to quaternary structure, the nucleosome is a histone octamer containing two molecules each of H2A, H2B, H3 and H4 assembled in one H3-H4 heterotetramer and two H2A-H2B heterodimers. The octamer wraps approximately 147 bp of DNA. Post-translationally, monoubiquitination of Lys-137 gives a specific tag for epigenetic transcriptional activation and is also prerequisite for histone H3 'Lys-4' and 'Lys-79' methylation. Phosphorylated on SPKK motifs 3, 4 and 5; which may regulate DNA binding. Dephosphorylated during maturation of spermatids to mature sperm and rephosphorylated at fertilization. In terms of processing, glcNAcylation at Ser-129 promotes monoubiquitination of Lys-137. It fluctuates in response to extracellular glucose, and associates with transcribed genes.

The protein resides in the nucleus. It is found in the chromosome. Its function is as follows. Core component of nucleosome. Nucleosomes wrap and compact DNA into chromatin, limiting DNA accessibility to the cellular machineries which require DNA as a template. Histones thereby play a central role in transcription regulation, DNA repair, DNA replication and chromosomal stability. DNA accessibility is regulated via a complex set of post-translational modifications of histones, also called histone code, and nucleosome remodeling. This is Histone H2B.2, sperm from Psammechinus miliaris (Green sea urchin).